Reading from the N-terminus, the 743-residue chain is MEKQSNDAAVAGAPNDHGAAKCPVAHTAHGRRNRDWWPDALDISTLHRNSSLSDPMGSGFDYAMEFESLDLQAVIKDLHALMTDSQDWWPADFGHYGGLMIRMAWHSAGTYRITDGRGGAGAGQQRFAPLNSWPDNANLDKARRLLWPVKQKYGDKISWADLMVLAGNVALESMGFKTFGFAGGRSDVWEPEELYWGPEGTWLGDERYSGERQLSEPLGAVQMGLIYVNPEGPNGNPDPVAAAKDIRETFFRMAMNDEETVALIAGGHTFGKTHGAGDPSLVGPDPESGALEDQGLGWKSKFGTGFGADAITGGPEVTWSQTPTQWSNSFFKNLFENEWELTNSPAGAKQWRAKNGQATIPDPFDKSKKRVPTMLTTDLSLRFDPAYEKISRRFYENPDQFADAFARAWFKLTHRDMGPIARYLGPLVPKETLLWQDPIPPVDHPLIDENDASALKAKILASGLSTSDLVSTAWASASTFRGSDKRGGANGARIRLAPQKDWEVNQPKQLAKVLEKLETIGKEFGKKVSLADLIVLGGDAAIEKAAKDAGVEVKIPFTPGRMDASQEQTDVASFAPLEPKADGFRNYIGRKTQFLQPEEALVDRAQLLRLTGPEMTVLVGGLRVLGANTAGSKHGVFTATPGVLTNDFFVNLLDMRTHWQPAGGEEGVYEGRDRKTNALKWTGTRVDLIFGSHSQLRAFAEVYAWAGSKEKFVKDFAAAWNKVMNLDRYDVARTGETKKAAVV.

Positions 1–22 (MEKQSNDAAVAGAPNDHGAAKC) are disordered. Residues 105–227 (WHSAGTYRIT…LGAVQMGLIY (123 aa)) constitute a cross-link (tryptophyl-tyrosyl-methioninium (Trp-Tyr) (with M-253)). The active-site Proton acceptor is His106. Positions 227 to 253 (YVNPEGPNGNPDPVAAAKDIRETFFRM) form a cross-link, tryptophyl-tyrosyl-methioninium (Tyr-Met) (with W-105). Residue His268 coordinates heme b.

The protein belongs to the peroxidase family. Peroxidase/catalase subfamily. In terms of assembly, homodimer or homotetramer. Heme b serves as cofactor. Formation of the three residue Trp-Tyr-Met cross-link is important for the catalase, but not the peroxidase activity of the enzyme.

The catalysed reaction is H2O2 + AH2 = A + 2 H2O. The enzyme catalyses 2 H2O2 = O2 + 2 H2O. Functionally, bifunctional enzyme with both catalase and broad-spectrum peroxidase activity. The protein is Catalase-peroxidase of Solibacter usitatus (strain Ellin6076).